A 306-amino-acid polypeptide reads, in one-letter code: uncharacterized protein (306 aa).

The tract at residues 40 to 156 is disordered; it reads HETCSTPGED…AVASASAPTE (117 aa). Residues 64 to 73 show a composition bias toward low complexity; it reads EGINLGEEGL. Over residues 129-139 the composition is skewed to basic residues; it reads KQHKKAKKRKS.

This is an uncharacterized protein from Rattus norvegicus (Rat).